The chain runs to 1144 residues: Ribonucleoside-diphosphate reductase large subunit (1144 aa).

Positions 1–33 are disordered; it reads MANRPAASALAGARSPSERQEPREPEVAPPGGD. The span at 16-26 shows a compositional bias: basic and acidic residues; that stretch reads PSERQEPREPE. The short motif at 55-75 is the RIP homotypic interaction motif (RHIM) element; that stretch reads AYRISDSSFVQCGSNCSMIID. Residues 118 to 324 are disordered; that stretch reads SGPSATTSVG…TDPGYPVPLE (207 aa). The span at 119-132 shows a compositional bias: polar residues; it reads GPSATTSVGTQTSG. Over residues 141–159 the composition is skewed to pro residues; it reads TPEPQGPQAVPPPPPPPFP. Over residues 164–179 the composition is skewed to basic and acidic residues; it reads CCARRDARGGAEKDVG. Residues 192–204 show a composition bias toward acidic residues; that stretch reads SETEDSDSSDEDT. Low complexity-rich tracts occupy residues 205–216 and 279–305; these read GSGSETLSRSSS and GSATDPRASADSDSAAHAAAPQADVAP. Residues Thr573, 588–589, Gly619, 798–802, and 975–979 contribute to the substrate site; these read SC, NLCTE, and PTAAS. Cys589 and Cys815 form a disulfide bridge. Residue Asn798 is the Proton acceptor of the active site. Residue Cys800 is the Cysteine radical intermediate of the active site. Glu802 (proton acceptor) is an active-site residue.

It belongs to the ribonucleoside diphosphate reductase large chain family. In terms of assembly, heterotetramer composed of a homodimer of the large subunit (R1) and a homodimer of the small subunit (R2). Larger multisubunit protein complex are also active, composed of (R1)n(R2)n. May self-assemble (via RIP homotypic interaction motif/RHIM) into homomeric fibrillar amyloid structures. Interacts (via RHIM) with human RIPK1 (via RHIM). Interacts (via RHIM) with human RIPK3 (via RHIM). May interact (via RHIM) with human ZBP1 (via RHIM). Interacts (via C-terminus) with host CASP8.

The enzyme catalyses a 2'-deoxyribonucleoside 5'-diphosphate + [thioredoxin]-disulfide + H2O = a ribonucleoside 5'-diphosphate + [thioredoxin]-dithiol. In terms of biological role, ribonucleoside-diphosphate reductase holoenzyme that provides the precursors necessary for viral DNA synthesis. Allows virus growth in non-dividing cells, as well as reactivation from latency in infected hosts. Catalyzes the biosynthesis of deoxyribonucleotides from the corresponding ribonucleotides. The N-terminal region confers antiapoptotic activity in differentiated cells such as neurons and is important for viral reactivation to increase neural survivability. Prevents host necroptosis by targeting host RIPK1 and RIPK3, thereby hampering the formation of necroptotic RIPK1-RIPK3 complexes. May form hetero-amyloid structures with host proteins RIPK3 or ZBP1, thereby preventing RIPK3- and ZBP1-mediated necroptosis. In addition, inhibits extrinsic apoptosis by targeting host CASP8. This Homo sapiens (Human) protein is Ribonucleoside-diphosphate reductase large subunit.